A 353-amino-acid polypeptide reads, in one-letter code: Paraneoplastic antigen Ma1 homolog (353 aa).

It belongs to the PNMA family.

It localises to the nucleus. Its subcellular location is the nucleolus. This chain is Paraneoplastic antigen Ma1 homolog (PNMA1), found in Bos taurus (Bovine).